The sequence spans 481 residues: ADAMTS-like protein 5 (481 aa).

The signal sequence occupies residues Met1–Ala42. Residues Pro45 to Pro97 form the TSP type-1 domain. Intrachain disulfides connect Cys57/Cys91, Cys61/Cys96, and Cys72/Cys81. N-linked (GlcNAc...) asparagine glycosylation occurs at Asn218. The tract at residues Gln331–Pro361 is disordered. The segment covering Pro345–Leu355 has biased composition (low complexity). 3 disulfides stabilise this stretch: Cys360-Cys425, Cys363-Cys427, and Cys377-Cys479. Residues Cys360–Cys479 enclose the NTR domain.

Interacts with heparin, FBN1 and FBN2. Post-translationally, proteolytically cleaved to release a C-terminal fragment containing the NTR domain. In terms of processing, contains at least one additional N-linked glycosylation site.

It localises to the secreted. It is found in the extracellular space. Its subcellular location is the extracellular matrix. Its function is as follows. May play a role in modulation of fibrillin microfibrils in the extracellular matrix (ECM). The polypeptide is ADAMTS-like protein 5 (ADAMTSL5) (Homo sapiens (Human)).